A 268-amino-acid chain; its full sequence is AN1-type zinc finger protein 1 (268 aa).

Residue Ala-2 is modified to N-acetylalanine. 2 AN1-type zinc fingers span residues Leu-4–Glu-52 and Glu-58–Pro-106. Zn(2+)-binding residues include Cys-10, Cys-15, Cys-25, Cys-28, Cys-33, His-36, His-42, Cys-44, Cys-64, Cys-69, Cys-79, Cys-82, Cys-87, His-90, His-96, and Cys-98. The tract at residues Gln-160 to Leu-260 is ubiquitin-like.

Associates with the 26S proteasome; this association occurs upon exposure to arsenite and is reduced in the presence of ATP. Interacts (via AN1-type 1 and 2 zinc fingers) with PSMD1; this interaction is increased upon arsenite treatment and occurs in an ATP-independent manner. Interacts with PSMC4. Interacts with PSMA1. Interacts (via its ubiquitin-like region) with VCP; this interaction occurs in an arsenite-dependent manner and is necessary for the recruitment of the ubiquitin-selective ATPase VCP to stress granules (SGs).

Its subcellular location is the cytoplasm. The protein localises to the stress granule. Its function is as follows. Plays a role in the regulation of cytoplasmic stress granules (SGs) turnover. SGs are dynamic and transient cytoplasmic ribonucleoprotein assemblies important for cellular protein homeostasis when protein production is suspended after acute exogenous stress. Associates with SGs and is involved in the efficient and specific arsenite-induced clearance process of SGs through the recruitment of the ubiquitin-selective ATPase VCP and the 26S proteasome. This process requires both complexes for efficient degradation of damaged ubiquitinated SG proteins during recovery from arsenite stress, and hence avoiding aberrant cytoplasmic SGs degradation via autophagy. The protein is AN1-type zinc finger protein 1 of Mus musculus (Mouse).